The chain runs to 368 residues: 4-hydroxy-3-methylbut-2-en-1-yl diphosphate synthase (flavodoxin) (368 aa).

[4Fe-4S] cluster-binding residues include cysteine 271, cysteine 274, cysteine 306, and glutamate 313.

Belongs to the IspG family. [4Fe-4S] cluster serves as cofactor.

The enzyme catalyses (2E)-4-hydroxy-3-methylbut-2-enyl diphosphate + oxidized [flavodoxin] + H2O + 2 H(+) = 2-C-methyl-D-erythritol 2,4-cyclic diphosphate + reduced [flavodoxin]. It participates in isoprenoid biosynthesis; isopentenyl diphosphate biosynthesis via DXP pathway; isopentenyl diphosphate from 1-deoxy-D-xylulose 5-phosphate: step 5/6. Its function is as follows. Converts 2C-methyl-D-erythritol 2,4-cyclodiphosphate (ME-2,4cPP) into 1-hydroxy-2-methyl-2-(E)-butenyl 4-diphosphate. This chain is 4-hydroxy-3-methylbut-2-en-1-yl diphosphate synthase (flavodoxin), found in Mannheimia succiniciproducens (strain KCTC 0769BP / MBEL55E).